A 446-amino-acid polypeptide reads, in one-letter code: Probable glycine dehydrogenase (decarboxylating) subunit 1 (446 aa).

This sequence belongs to the GcvP family. N-terminal subunit subfamily. The glycine cleavage system is composed of four proteins: P, T, L and H. In this organism, the P 'protein' is a heterodimer of two subunits.

The enzyme catalyses N(6)-[(R)-lipoyl]-L-lysyl-[glycine-cleavage complex H protein] + glycine + H(+) = N(6)-[(R)-S(8)-aminomethyldihydrolipoyl]-L-lysyl-[glycine-cleavage complex H protein] + CO2. Functionally, the glycine cleavage system catalyzes the degradation of glycine. The P protein binds the alpha-amino group of glycine through its pyridoxal phosphate cofactor; CO(2) is released and the remaining methylamine moiety is then transferred to the lipoamide cofactor of the H protein. This chain is Probable glycine dehydrogenase (decarboxylating) subunit 1, found in Methylocella silvestris (strain DSM 15510 / CIP 108128 / LMG 27833 / NCIMB 13906 / BL2).